The chain runs to 332 residues: Adenosine receptor A2b (332 aa).

At 1–8 (MQLETQDA) the chain is on the extracellular side. Residues 9–33 (LYVALELVIAALAVAGNVLVCAAVG) traverse the membrane as a helical segment. Residues 34–43 (ASSALQTPTN) are Cytoplasmic-facing. Residues 44–67 (YFLVSLATADVAVGLFAIPFAITI) traverse the membrane as a helical segment. The Extracellular segment spans residues 68-78 (SLGFCTDFHSC). Cysteine 78 and cysteine 171 are joined by a disulfide. The helical transmembrane segment at 79 to 101 (LFLACFVLVLTQSSIFSLLAVAV) threads the bilayer. The Cytoplasmic segment spans residues 102-121 (DRYLAIRVPLRYKGLVTGTR). The helical transmembrane segment at 122–144 (ARGIIAVLWVLAFGIGLTPFLGW) threads the bilayer. Over 145-178 (NSKDRATSNCTEPGDGITNKSCCPVKCLFENVVP) the chain is Extracellular. N-linked (GlcNAc...) asparagine glycans are attached at residues asparagine 153 and asparagine 163. Glutamate 174 provides a ligand contact to adenosine. A helical transmembrane segment spans residues 179 to 203 (MSYMVYFNFFGCVLPPLLIMMVIYI). Topologically, residues 204–235 (KIFMVACKQLQHMELMEHSRTTLQREIHAAKS) are cytoplasmic. Residues 236–259 (LAMIVGIFALCWLPVHAINCITLF) traverse the membrane as a helical segment. Asparagine 254 provides a ligand contact to adenosine. The Extracellular segment spans residues 260 to 267 (HPALAKDK). The helical transmembrane segment at 268–291 (PKWVMNVAILLSHANSVVNPIVYA) threads the bilayer. Adenosine-binding residues include serine 279 and histidine 280. Residues 292-332 (YRNRDFRYSFHRIISRYVLCQTDTKGGSGQAGGQSTFSLSL) lie on the Cytoplasmic side of the membrane. The S-palmitoyl cysteine moiety is linked to residue cysteine 311.

The protein belongs to the G-protein coupled receptor 1 family.

The protein resides in the cell membrane. In terms of biological role, receptor for adenosine. The activity of this receptor is mediated by G proteins which activate adenylyl cyclase. The sequence is that of Adenosine receptor A2b (Adora2b) from Rattus norvegicus (Rat).